A 600-amino-acid chain; its full sequence is Tripeptidyl-peptidase 1 (600 aa).

The first 22 residues, 1-22 (MNIKFNLIIIILFILFISNVNC), serve as a signal peptide directing secretion. Residues 23 to 220 (KKIKNKKHLT…GGGGKVNGIG (198 aa)) constitute a propeptide, removed in mature form. Residues asparagine 91, asparagine 259, and asparagine 266 are each glycosylated (N-linked (GlcNAc...) asparagine). The 353-residue stretch at 248–600 (YLSPDLIRKE…FDELVKYCLE (353 aa)) folds into the Peptidase S53 domain. Catalysis depends on charge relay system residues glutamate 318 and aspartate 322. Cysteine 411 and cysteine 570 form a disulfide bridge. 2 N-linked (GlcNAc...) asparagine glycosylation sites follow: asparagine 475 and asparagine 483. Serine 514 functions as the Charge relay system in the catalytic mechanism. Ca(2+) is bound by residues aspartate 559, isoleucine 560, glycine 579, and aspartate 581.

As to quaternary structure, monomer. Ca(2+) serves as cofactor. Post-translationally, activated by autocatalytic proteolytical processing upon acidification. N-glycosylation is required for processing and activity.

The protein localises to the secreted. The enzyme catalyses Release of an N-terminal tripeptide from a polypeptide, but also has endopeptidase activity.. Its function is as follows. Serine protease with tripeptidyl-peptidase I activity. The protein is Tripeptidyl-peptidase 1 (tpp1) of Dictyostelium discoideum (Social amoeba).